We begin with the raw amino-acid sequence, 557 residues long: Intraflagellar transport protein 56 (557 aa).

The tract at residues 1 to 30 is disordered; that stretch reads MLLSRMKPAVGGEASTSSNEKKRKNKSKKI. The span at 21–30 shows a compositional bias: basic residues; sequence KKRKNKSKKI. TPR repeat units follow at residues 60–93, 95–128, 154–187, and 471–504; these read EHAD…PDCP, DVWV…LQNR, TEDQ…NREF, and ANDC…EGKR.

The protein belongs to the IFT56 family. As to quaternary structure, component of the IFT complex B.

The protein resides in the cell projection. The protein localises to the cilium. Functionally, component of the intraflagellar transport (IFT) complex B required for transport of proteins in the motile cilium. Required for transport of specific ciliary cargo proteins related to motility, while it is neither required for IFT complex B assembly or motion nor for cilium assembly. Plays a key role in maintaining the integrity of the IFT complex B and the proper ciliary localization of the IFT complex B components. Essential for maintaining proper microtubule organization within the ciliary axoneme. This Danio rerio (Zebrafish) protein is Intraflagellar transport protein 56.